Here is a 359-residue protein sequence, read N- to C-terminus: DNA integrity scanning protein DisA (359 aa).

The DAC domain maps to 7–145 (DDIFRATLAA…AGRRYVLDGA (139 aa)). ATP-binding positions include glycine 74, leucine 92, and 105–109 (TRHRT).

This sequence belongs to the DisA family. In terms of assembly, homooctamer. Requires Mg(2+) as cofactor.

It catalyses the reaction 2 ATP = 3',3'-c-di-AMP + 2 diphosphate. Participates in a DNA-damage check-point that is active prior to asymmetric division when DNA is damaged. DisA forms globular foci that rapidly scan along the chromosomes during sporulation, searching for lesions. When a lesion is present, DisA pauses at the lesion site. This triggers a cellular response that culminates in a temporary block in sporulation initiation. Its function is as follows. Also has diadenylate cyclase activity, catalyzing the condensation of 2 ATP molecules into cyclic di-AMP (c-di-AMP). c-di-AMP acts as a signaling molecule that couples DNA integrity with progression of sporulation. The rise in c-di-AMP level generated by DisA while scanning the chromosome, operates as a positive signal that advances sporulation; upon encountering a lesion, the DisA focus arrests at the damaged site and halts c-di-AMP synthesis. In Parafrankia sp. (strain EAN1pec), this protein is DNA integrity scanning protein DisA.